A 458-amino-acid chain; its full sequence is Bifunctional protein GlmU (458 aa).

The tract at residues methionine 1–arginine 232 is pyrophosphorylase. UDP-N-acetyl-alpha-D-glucosamine-binding positions include leucine 10–glycine 13, lysine 24, glutamine 79, glycine 84–threonine 85, tyrosine 106–aspartate 108, glycine 142, glutamate 157, asparagine 172, and asparagine 230. Aspartate 108 is a Mg(2+) binding site. Asparagine 230 serves as a coordination point for Mg(2+). Residues glutamine 233–alanine 253 are linker. Residues glycine 254–lysine 458 form an N-acetyltransferase region. 2 residues coordinate UDP-N-acetyl-alpha-D-glucosamine: arginine 336 and lysine 354. Residue histidine 366 is the Proton acceptor of the active site. 2 residues coordinate UDP-N-acetyl-alpha-D-glucosamine: tyrosine 369 and asparagine 380. Acetyl-CoA is bound by residues alanine 383, asparagine 389–tyrosine 390, serine 408, alanine 426, and arginine 443.

It in the N-terminal section; belongs to the N-acetylglucosamine-1-phosphate uridyltransferase family. This sequence in the C-terminal section; belongs to the transferase hexapeptide repeat family. As to quaternary structure, homotrimer. It depends on Mg(2+) as a cofactor.

The protein resides in the cytoplasm. It carries out the reaction alpha-D-glucosamine 1-phosphate + acetyl-CoA = N-acetyl-alpha-D-glucosamine 1-phosphate + CoA + H(+). The enzyme catalyses N-acetyl-alpha-D-glucosamine 1-phosphate + UTP + H(+) = UDP-N-acetyl-alpha-D-glucosamine + diphosphate. Its pathway is nucleotide-sugar biosynthesis; UDP-N-acetyl-alpha-D-glucosamine biosynthesis; N-acetyl-alpha-D-glucosamine 1-phosphate from alpha-D-glucosamine 6-phosphate (route II): step 2/2. The protein operates within nucleotide-sugar biosynthesis; UDP-N-acetyl-alpha-D-glucosamine biosynthesis; UDP-N-acetyl-alpha-D-glucosamine from N-acetyl-alpha-D-glucosamine 1-phosphate: step 1/1. It participates in bacterial outer membrane biogenesis; LPS lipid A biosynthesis. In terms of biological role, catalyzes the last two sequential reactions in the de novo biosynthetic pathway for UDP-N-acetylglucosamine (UDP-GlcNAc). The C-terminal domain catalyzes the transfer of acetyl group from acetyl coenzyme A to glucosamine-1-phosphate (GlcN-1-P) to produce N-acetylglucosamine-1-phosphate (GlcNAc-1-P), which is converted into UDP-GlcNAc by the transfer of uridine 5-monophosphate (from uridine 5-triphosphate), a reaction catalyzed by the N-terminal domain. This is Bifunctional protein GlmU from Psychrobacter cryohalolentis (strain ATCC BAA-1226 / DSM 17306 / VKM B-2378 / K5).